A 437-amino-acid chain; its full sequence is UDP-N-acetylmuramate--L-alanine ligase (437 aa).

114-120 is a binding site for ATP; it reads GTHGKTS.

This sequence belongs to the MurCDEF family.

The protein resides in the cytoplasm. It carries out the reaction UDP-N-acetyl-alpha-D-muramate + L-alanine + ATP = UDP-N-acetyl-alpha-D-muramoyl-L-alanine + ADP + phosphate + H(+). The protein operates within cell wall biogenesis; peptidoglycan biosynthesis. Functionally, cell wall formation. The chain is UDP-N-acetylmuramate--L-alanine ligase from Lactobacillus acidophilus (strain ATCC 700396 / NCK56 / N2 / NCFM).